The primary structure comprises 375 residues: Geranylgeranyl transferase type-1 subunit beta (375 aa).

Residues 1-33 form a disordered region; that stretch reads MSETAVSIDSDRSKSEEEDEEEYSPPVQSSPSA. An N-acetylserine modification is found at S2. PFTB repeat units follow at residues 157–199, 206–247, 265–306, and 313–354; these read SKSL…YMLD, KESA…RLMG, PSLL…KLIG, and KMAL…SLLE. Residues 232 to 234 and 285 to 288 each bind geranylgeranyl diphosphate; these read HGG and RTNK. Positions 291 and 293 each coordinate Zn(2+). A geranylgeranyl diphosphate-binding site is contributed by 294–297; sequence YAFW. H342 contacts Zn(2+).

This sequence belongs to the protein prenyltransferase subunit beta family. Heterodimer of an alpha and a beta subunit. Zn(2+) serves as cofactor. Mg(2+) is required as a cofactor. Expressed in roots, leaves, stems, flowers and siliques.

The enzyme catalyses geranylgeranyl diphosphate + L-cysteinyl-[protein] = S-geranylgeranyl-L-cysteinyl-[protein] + diphosphate. Its function is as follows. Catalyzes the transfer of a geranyl-geranyl moiety from geranyl-geranyl pyrophosphate to a cysteine at the fourth position from the C-terminus of proteins having the C-terminal sequence Cys-aliphatic-aliphatic-X (CaaX). Seems to exclusively prenylate CaaX substrates with leucine in the terminal position. The beta subunit is responsible for peptide-binding. May negatively regulate abscisic acid (ABA) signaling in guard cells and auxin-induced lateral root initiation. Functionally, negatively regulates ABA signaling in guard cells. in negative regulation of auxin-induced lateral root initiation. The sequence is that of Geranylgeranyl transferase type-1 subunit beta (GGB) from Arabidopsis thaliana (Mouse-ear cress).